The following is a 527-amino-acid chain: Tyrosine--tRNA ligase, cytoplasmic (527 aa).

L-tyrosine is bound at residue tyrosine 39. Residues 44–52 (TTGKPHVAY) carry the 'HIGH' region motif. Positions 166, 170, 173, and 188 each coordinate L-tyrosine. Positions 222–226 (KMSSS) match the 'KMSKS' region motif. The short motif at 242–247 (KKKLKK) is the Nuclear localization signal element. Positions 337 to 362 (TNAAYPNPSKAKPAEKGTKNSEPETI) are disordered. Positions 348–358 (KPAEKGTKNSE) are enriched in basic and acidic residues. In terms of domain architecture, tRNA-binding spans 363 to 467 (VPSRLDIRVG…AECCAGERVY (105 aa)).

Belongs to the class-I aminoacyl-tRNA synthetase family. Homodimer.

It localises to the cytoplasm. Its subcellular location is the nucleus. The enzyme catalyses tRNA(Tyr) + L-tyrosine + ATP = L-tyrosyl-tRNA(Tyr) + AMP + diphosphate + H(+). Catalyzes the attachment of tyrosine to tRNA(Tyr) in a two-step reaction: tyrosine is first activated by ATP to form Tyr-AMP and then transferred to the acceptor end of tRNA(Tyr). In Gallus gallus (Chicken), this protein is Tyrosine--tRNA ligase, cytoplasmic (YARS1).